We begin with the raw amino-acid sequence, 57 residues long: Dendroaspis polylepis MT9 (57 aa).

4 disulfides stabilise this stretch: Cys3-Cys22, Cys17-Cys36, Cys38-Cys49, and Cys50-Cys55.

Belongs to the three-finger toxin family. Short-chain subfamily. As to expression, expressed by the venom gland.

The protein localises to the secreted. When tested on muscarinic GPCR, specifically antagonizes the type 2 receptor (CHRM2) subtype (Ki/Kd=120-399 nM). Ex vivo, it reverses the M2R-agonist-induced relaxation in rat and human arteries. This Dendroaspis polylepis polylepis (Black mamba) protein is Dendroaspis polylepis MT9.